Reading from the N-terminus, the 133-residue chain is ATP synthase epsilon chain, chloroplastic (133 aa).

It belongs to the ATPase epsilon chain family. In terms of assembly, F-type ATPases have 2 components, CF(1) - the catalytic core - and CF(0) - the membrane proton channel. CF(1) has five subunits: alpha(3), beta(3), gamma(1), delta(1), epsilon(1). CF(0) has three main subunits: a, b and c.

The protein localises to the plastid. The protein resides in the chloroplast thylakoid membrane. In terms of biological role, produces ATP from ADP in the presence of a proton gradient across the membrane. In Daucus carota (Wild carrot), this protein is ATP synthase epsilon chain, chloroplastic.